The sequence spans 40 residues: Photosystem II reaction center protein J (40 aa).

Residues 8–28 form a helical membrane-spanning segment; sequence IPLWIIGTGAGILVIGLIGIF.

It belongs to the PsbJ family. As to quaternary structure, PSII is composed of 1 copy each of membrane proteins PsbA, PsbB, PsbC, PsbD, PsbE, PsbF, PsbH, PsbI, PsbJ, PsbK, PsbL, PsbM, PsbT, PsbX, PsbY, PsbZ, Psb30/Ycf12, at least 3 peripheral proteins of the oxygen-evolving complex and a large number of cofactors. It forms dimeric complexes.

The protein resides in the plastid. Its subcellular location is the chloroplast thylakoid membrane. Functionally, one of the components of the core complex of photosystem II (PSII). PSII is a light-driven water:plastoquinone oxidoreductase that uses light energy to abstract electrons from H(2)O, generating O(2) and a proton gradient subsequently used for ATP formation. It consists of a core antenna complex that captures photons, and an electron transfer chain that converts photonic excitation into a charge separation. The chain is Photosystem II reaction center protein J from Aethionema grandiflorum (Persian stone-cress).